The sequence spans 418 residues: F-box/LRR-repeat protein 14 (418 aa).

The region spanning 2–48 (ETHISCLFPELLAMIFGYLDVRDKGRAAQVCTAWRDAAYHKSVWRGV) is the F-box domain. Residues 2-48 (ETHISCLFPELLAMIFGYLDVRDKGRAAQVCTAWRDAAYHKSVWRGV) are required for down-regulation of SNAI1. LRR repeat units follow at residues 144 to 163 (GLEV…GLLL), 170 to 191 (RLKS…GHLA), 203 to 225 (GLEQ…HISR), 229 to 250 (GLRL…LHLS), and 254 to 275 (SLRS…MHLA).

In terms of assembly, part of a SCF (SKP1-cullin-F-box) ubiquitin-protein ligase complex. Interacts with SKP1 and CUL1. Interacts with SNAI1; the interaction requires the phosphorylation of the two serine residues in the substrate destruction motif D-S-G-X(2,3,4)-S.

It localises to the cytoplasm. In terms of biological role, substrate-recognition component of some SCF (SKP1-CUL1-F-box protein)-type E3 ubiquitin-protein ligase complexes. The SCF(FBXL14) complex acts by mediating ubiquitination and subsequent degradation of SNAI1. In Homo sapiens (Human), this protein is F-box/LRR-repeat protein 14 (FBXL14).